Consider the following 366-residue polypeptide: UDP-N-acetylglucosamine--N-acetylmuramyl-(pentapeptide) pyrophosphoryl-undecaprenol N-acetylglucosamine transferase (366 aa).

Residues 14-16, asparagine 125, arginine 168, serine 196, and glutamine 297 contribute to the UDP-N-acetyl-alpha-D-glucosamine site; that span reads TGG.

It belongs to the glycosyltransferase 28 family. MurG subfamily.

The protein localises to the cell inner membrane. The enzyme catalyses di-trans,octa-cis-undecaprenyl diphospho-N-acetyl-alpha-D-muramoyl-L-alanyl-D-glutamyl-meso-2,6-diaminopimeloyl-D-alanyl-D-alanine + UDP-N-acetyl-alpha-D-glucosamine = di-trans,octa-cis-undecaprenyl diphospho-[N-acetyl-alpha-D-glucosaminyl-(1-&gt;4)]-N-acetyl-alpha-D-muramoyl-L-alanyl-D-glutamyl-meso-2,6-diaminopimeloyl-D-alanyl-D-alanine + UDP + H(+). Its pathway is cell wall biogenesis; peptidoglycan biosynthesis. Its function is as follows. Cell wall formation. Catalyzes the transfer of a GlcNAc subunit on undecaprenyl-pyrophosphoryl-MurNAc-pentapeptide (lipid intermediate I) to form undecaprenyl-pyrophosphoryl-MurNAc-(pentapeptide)GlcNAc (lipid intermediate II). This chain is UDP-N-acetylglucosamine--N-acetylmuramyl-(pentapeptide) pyrophosphoryl-undecaprenol N-acetylglucosamine transferase, found in Bradyrhizobium diazoefficiens (strain JCM 10833 / BCRC 13528 / IAM 13628 / NBRC 14792 / USDA 110).